Consider the following 146-residue polypeptide: Large ribosomal subunit protein uL11 (146 aa).

It belongs to the universal ribosomal protein uL11 family. As to quaternary structure, part of the ribosomal stalk of the 50S ribosomal subunit. Interacts with L10 and the large rRNA to form the base of the stalk. L10 forms an elongated spine to which L12 dimers bind in a sequential fashion forming a multimeric L10(L12)X complex. Post-translationally, one or more lysine residues are methylated.

Its function is as follows. Forms part of the ribosomal stalk which helps the ribosome interact with GTP-bound translation factors. This is Large ribosomal subunit protein uL11 from Blochmanniella floridana.